Reading from the N-terminus, the 1408-residue chain is MSASPGLTAAAAGPDHLQARRDEKVIDSEKDALAHDAHAVNSGIPYPTATAPNVGAPTVPISVGRVSSAAEGKISRSSIAASSDTLRNSPLEKPISNAFSKSHPYKKSKFDFLKSRKKKEEEERKNKEKEKEASVLPPVSFFALFRFAAPLEIIAMVLGLVLAVAAGSCQPLMTLIFGRLTTSFTNYAVIANQISQGGLTPETSAALQAAKDDLKTQSGHNALYLMAIGIGMFLATWLYMFIWNVTGELNSKRIRERYLAAVLRQEIAYFDDLGAGEVATRIQTDCHLVQEGTSEKVALVFQYAGTFVCGFVLAFVRSPRLAGALVSILPVIMLCGGIMMTAMAKYGTAALDHIAKAGSLAEEVIGSIRTVQAFGKEKILGDKFADHIEQSKIVGRKGSIFEGFGLSIMFFVIYAAYALAFFYGGILVSNGQADSGIVINVFMSILIGSFSMAMLAPELAAVTKARGAAAKLFATIDRVPAIDSASEEGFKPDGLRGEISFENVKFHYPSRPSIPILKGFTTTFEAGKTFALVGASGSGKSTVVSLIERFYDPVSGVVKLDGRDIRSLNLNWLRQQIGLVSQEPTLFGTTVRGNVEHGLIGSRYENASLEEKFELVKKACVDANAHNFIMKLPQGYDTMVGERGMLLSGGQKQRVAIARAIVSDPRILLLDEATSALDTQSEGIVQDALDKASRGRTTITIAHRLSTIRDADRIYVMGGGEVLEQGSHNDLLANENGPYAQLVNNQKLAQEAAAEALQVDDDIEDPDDAVFIGGSSPMQEKDKQLHRAVTGRSLASIAMDDIQAKRAEEVAGEDKIPSSFGLYARLLRMNSADKFIYIIAFIAAICAGMVYPSLAILFGKALSDFEIQDPAELRHALSRSALWYFITALAAAFVIFFQSAGFSRAGWDLNGVLRKKLFTATLRHDIEWFDEERNSTGAVTSNLADQPQKVQGLFGPTLGTVVQSCATLIGGCIIGLCYGPLLALIGIACIPILVSGGYIRLKVVVLKDQRMKKLHAASAHLASEAAGAVKTVASLTREKDVRRIYSEALKAPMKLNFRTSIKSQCLFAASQGLTFCIIALVFYIGALWIIDAKYSTASFYTVLNSIVFASIQAGNVFTFVPDASKANSSAASIFRSIDNEPAINAESNEGKVLDHKHVVGHVRIEGVHFRYPTRPGVRVLRNLTIDVPAGTYVALVGPSGCGKSTTIQMLERFYDPLAGRVTLDGIDIKELNLASYRSQISLVSQEPTLYAGTIRFNILLGANKPIEEVTQDEIDAACKDANIYDFIVSLPDGFDTEVGGKGSQLSGGQKQRIAIARALIRNPKVLLLDEATSALDSQSEKVVQEALDKAAKGRTTIAIAHRLSSIQHSDRIYYFSEGRVAEHGTHQELLAKKGGYYELVQMQNLSRQ.

The span at 79–88 shows a compositional bias: polar residues; it reads IAASSDTLRN. The tract at residues 79 to 102 is disordered; the sequence is IAASSDTLRNSPLEKPISNAFSKS. The next 2 helical transmembrane spans lie at 147 to 167 and 223 to 243; these read FAAP…VAAG and LYLM…MFIW. Residues 157–464 form the ABC transmembrane type-1 1 domain; the sequence is VLGLVLAVAA…LAPELAAVTK (308 aa). A glycan (N-linked (GlcNAc...) asparagine) is linked at Asn-244. 4 helical membrane-spanning segments follow: residues 296-316, 321-341, 408-428, and 436-456; these read KVAL…LAFV, LAGA…IMMT, IMFF…GILV, and GIVI…AMLA. In terms of domain architecture, ABC transporter 1 spans 499-744; that stretch reads ISFENVKFHY…ENGPYAQLVN (246 aa). 534–541 contacts ATP; that stretch reads GASGSGKS. N-linked (GlcNAc...) asparagine glycosylation occurs at Asn-606. Helical transmembrane passes span 838–858 and 882–902; these read IIAF…AILF and LWYF…SAGF. The 288-residue stretch at 838–1125 folds into the ABC transmembrane type-1 2 domain; the sequence is IIAFIAAICA…VFTFVPDASK (288 aa). Residue Asn-934 is glycosylated (N-linked (GlcNAc...) asparagine). 4 helical membrane-spanning segments follow: residues 952-972, 981-999, 1072-1092, and 1099-1119; these read GLFG…IGGC, LLAL…GGYI, GLTF…IIDA, and FYTV…VFTF. N-linked (GlcNAc...) asparagine glycosylation is found at Asn-1127 and Asn-1182. The 241-residue stretch at 1162–1402 folds into the ABC transporter 2 domain; the sequence is VRIEGVHFRY…KGGYYELVQM (241 aa). ATP is bound at residue 1197-1204; the sequence is GPSGCGKS. Asn-1404 is a glycosylation site (N-linked (GlcNAc...) asparagine).

It belongs to the ABC transporter superfamily. ABCB family. Multidrug resistance exporter (TC 3.A.1.201) subfamily.

It localises to the cell membrane. It carries out the reaction itraconazole(in) + ATP + H2O = itraconazole(out) + ADP + phosphate + H(+). It catalyses the reaction voriconazole(in) + ATP + H2O = voriconazole(out) + ADP + phosphate + H(+). The enzyme catalyses fluconazole(in) + ATP + H2O = fluconazole(out) + ADP + phosphate + H(+). In terms of biological role, pleiotropic ABC efflux transporter that confers resistance to structurally and functionally unrelated compounds including azoles such as fluconazole (FLC), itraconazole (ITC), posaconazole (POS), and voriconazole (VRC). The chain is ABC multidrug transporter MDR1 from Cryptococcus neoformans var. grubii serotype A (strain H99 / ATCC 208821 / CBS 10515 / FGSC 9487) (Filobasidiella neoformans var. grubii).